The sequence spans 535 residues: Methylmalonate-semialdehyde/malonate-semialdehyde dehydrogenase [acylating], mitochondrial (535 aa).

Residues 1–32 (MAAAVAAAAAVRSRILQVSSKVNSTWYPASSF) constitute a mitochondrion transit peptide. N6-acetyllysine; alternate is present on residues Lys47, Lys52, Lys55, and Lys76. N6-succinyllysine; alternate is present on residues Lys47, Lys52, Lys55, and Lys76. Lys87 bears the N6-acetyllysine mark. N6-acetyllysine; alternate is present on residues Lys117 and Lys129. N6-succinyllysine; alternate is present on residues Lys117 and Lys129. 6 residues coordinate NAD(+): Ala183, Phe185, Lys209, Glu212, Arg213, and Ser262. At Ser262 the chain carries Phosphoserine. Lys298 is modified (N6-acetyllysine). Cys317 functions as the Nucleophile in the catalytic mechanism. 2 positions are modified to N6-acetyllysine: Lys330 and Lys331. N6-acetyllysine; alternate occurs at positions 364 and 376. Lys364 and Lys376 each carry N6-succinyllysine; alternate. Ser380 carries the phosphoserine modification. Residue Lys391 is modified to N6-succinyllysine. Glu417 provides a ligand contact to NAD(+). Lys500 is modified (N6-acetyllysine). N6-succinyllysine is present on Lys517.

It belongs to the aldehyde dehydrogenase family. In terms of assembly, homotetramer. Expressed in the head and flagellum of epididymal sperm but not in testicular sperm (at protein level). Kidney &gt; liver &gt; heart &gt; muscle &gt; brain.

The protein localises to the mitochondrion. The enzyme catalyses 3-oxopropanoate + NAD(+) + CoA + H2O = hydrogencarbonate + acetyl-CoA + NADH + H(+). The catalysed reaction is 2-methyl-3-oxopropanoate + NAD(+) + CoA + H2O = propanoyl-CoA + hydrogencarbonate + NADH + H(+). It carries out the reaction (R)-2-methyl-3-oxopropanoate + NAD(+) + CoA + H2O = propanoyl-CoA + hydrogencarbonate + NADH + H(+). It catalyses the reaction (S)-2-methyl-3-oxopropanoate + NAD(+) + CoA + H2O = propanoyl-CoA + hydrogencarbonate + NADH + H(+). Functionally, malonate and methylmalonate semialdehyde dehydrogenase involved in the catabolism of valine, thymine, and compounds catabolized by way of beta-alanine, including uracil and cytidine. In Rattus norvegicus (Rat), this protein is Methylmalonate-semialdehyde/malonate-semialdehyde dehydrogenase [acylating], mitochondrial.